A 905-amino-acid chain; its full sequence is Protein translocase subunit SecA (905 aa).

Residues Gln-87, 105 to 109 (GEGKT), and Asp-512 contribute to the ATP site. Residues 836–905 (DVDAVDEQRK…KKYKHCHGKL (70 aa)) are disordered. The segment covering 841 to 858 (DEQRKAADSAPREFRHEQ) has biased composition (basic and acidic residues). Zn(2+)-binding residues include Cys-890, Cys-892, Cys-901, and His-902. Residues 896–905 (KKYKHCHGKL) are compositionally biased toward basic residues.

It belongs to the SecA family. Monomer and homodimer. Part of the essential Sec protein translocation apparatus which comprises SecA, SecYEG and auxiliary proteins SecDF-YajC and YidC. Zn(2+) is required as a cofactor.

It is found in the cell inner membrane. The protein localises to the cytoplasm. It catalyses the reaction ATP + H2O + cellular proteinSide 1 = ADP + phosphate + cellular proteinSide 2.. Part of the Sec protein translocase complex. Interacts with the SecYEG preprotein conducting channel. Has a central role in coupling the hydrolysis of ATP to the transfer of proteins into and across the cell membrane, serving both as a receptor for the preprotein-SecB complex and as an ATP-driven molecular motor driving the stepwise translocation of polypeptide chains across the membrane. The chain is Protein translocase subunit SecA from Idiomarina loihiensis (strain ATCC BAA-735 / DSM 15497 / L2-TR).